The following is a 403-amino-acid chain: CinA-like protein (403 aa).

This sequence belongs to the CinA family.

This Petrotoga mobilis (strain DSM 10674 / SJ95) protein is CinA-like protein.